The following is a 152-amino-acid chain: Deoxyuridine 5'-triphosphate nucleotidohydrolase (152 aa).

Substrate contacts are provided by residues 71–73, Asn-84, 88–90, and Met-98; these read RSG and LID.

It belongs to the dUTPase family. It depends on Mg(2+) as a cofactor.

The enzyme catalyses dUTP + H2O = dUMP + diphosphate + H(+). The protein operates within pyrimidine metabolism; dUMP biosynthesis; dUMP from dCTP (dUTP route): step 2/2. Its function is as follows. This enzyme is involved in nucleotide metabolism: it produces dUMP, the immediate precursor of thymidine nucleotides and it decreases the intracellular concentration of dUTP so that uracil cannot be incorporated into DNA. The polypeptide is Deoxyuridine 5'-triphosphate nucleotidohydrolase (Shewanella halifaxensis (strain HAW-EB4)).